A 791-amino-acid polypeptide reads, in one-letter code: Protein SEY1 (791 aa).

The Cytoplasmic portion of the chain corresponds to 1 to 685; sequence MSEDGASKCQ…KRSTIKSHTH (685 aa). In terms of domain architecture, GB1/RHD3-type G spans 40 to 268; the sequence is GLDYHVISVF…REDYYLSGKY (229 aa). 50-57 provides a ligand contact to GTP; that stretch reads GSQSSGKS. The chain crosses the membrane as a helical span at residues 686–706; the sequence is IPMWIYAIIAVLGWNEFMLVL. Residues 707–709 lie on the Lumenal side of the membrane; it reads RNP. A helical membrane pass occupies residues 710-730; it reads LFIALMLLIVGAAYTVHRLNL. Residues 731–791 are Cytoplasmic-facing; that stretch reads WTPLATFASA…NETKENANES (61 aa). The tract at residues 763-791 is disordered; sequence PKNASSKPVESFEMQDLSVNETKENANES.

The protein belongs to the TRAFAC class dynamin-like GTPase superfamily. GB1/RHD3 GTPase family. RHD3 subfamily.

The protein localises to the endoplasmic reticulum membrane. Functionally, cooperates with the reticulon proteins and tubule-shaping DP1 family proteins to generate and maintain the structure of the tubular endoplasmic reticulum network. Has GTPase activity, which is required for its function in ER organization. In Eremothecium gossypii (strain ATCC 10895 / CBS 109.51 / FGSC 9923 / NRRL Y-1056) (Yeast), this protein is Protein SEY1.